The primary structure comprises 189 residues: Chitin synthase 1 (189 aa).

This sequence belongs to the chitin synthase family. Class I subfamily.

The protein localises to the cell membrane. It catalyses the reaction [(1-&gt;4)-N-acetyl-beta-D-glucosaminyl](n) + UDP-N-acetyl-alpha-D-glucosamine = [(1-&gt;4)-N-acetyl-beta-D-glucosaminyl](n+1) + UDP + H(+). In terms of biological role, polymerizes chitin, a structural polymer of the cell wall and septum, by transferring the sugar moiety of UDP-GlcNAc to the non-reducing end of the growing chitin polymer. This Exophiala jeanselmei (Dematiaceous fungus) protein is Chitin synthase 1 (CHS1).